Here is a 328-residue protein sequence, read N- to C-terminus: Biotin synthase (328 aa).

Residues 50–277 (FGDQVHLCCI…GKEIVICGGR (228 aa)) enclose the Radical SAM core domain. Residues cysteine 67, cysteine 71, and cysteine 74 each contribute to the [4Fe-4S] cluster site. [2Fe-2S] cluster contacts are provided by serine 111, cysteine 142, and cysteine 202.

This sequence belongs to the radical SAM superfamily. Biotin synthase family. In terms of assembly, homodimer. It depends on [4Fe-4S] cluster as a cofactor. [2Fe-2S] cluster is required as a cofactor.

The enzyme catalyses (4R,5S)-dethiobiotin + (sulfur carrier)-SH + 2 reduced [2Fe-2S]-[ferredoxin] + 2 S-adenosyl-L-methionine = (sulfur carrier)-H + biotin + 2 5'-deoxyadenosine + 2 L-methionine + 2 oxidized [2Fe-2S]-[ferredoxin]. It functions in the pathway cofactor biosynthesis; biotin biosynthesis; biotin from 7,8-diaminononanoate: step 2/2. Catalyzes the conversion of dethiobiotin (DTB) to biotin by the insertion of a sulfur atom into dethiobiotin via a radical-based mechanism. The sequence is that of Biotin synthase from Desulfatibacillum aliphaticivorans.